The chain runs to 1288 residues: Probable serine/threonine-protein kinase drkD (1288 aa).

Positions 1–12 (MEGSFQFNKSKQ) are enriched in polar residues. 3 disordered regions span residues 1-132 (MEGS…QYHP), 156-223 (FNVS…PEEI), and 269-386 (SFGH…DDEE). 2 stretches are compositionally biased toward low complexity: residues 13-79 (TNNN…NSTS) and 156-220 (FNVS…QQQP). Residues 221–248 (EEIEGELNRERQERDKMLHEEAEIEQYK) are a coiled coil. The segment covering 271–291 (GHITSANSDETTNNESGSPIN) has biased composition (polar residues). Residues 302–343 (PHSSHNEDHQSDQDNHGQFMNDEHQSTDDDQNKSDNEKESES) are compositionally biased toward basic and acidic residues. A compositionally biased stretch (polar residues) spans 344–354 (ARNSGDLQQKV). The segment covering 376-386 (EGEEEDDDDEE) has biased composition (acidic residues). LRR repeat units follow at residues 400–421 (KSTK…VWSI), 423–444 (ELRD…IGLL), 446–468 (HLKR…YSLP), 469–490 (RLTT…INRL), 492–513 (SLKT…TNLH), 517–538 (NLVE…MLES), and 540–561 (HLQV…LKKS). 3 disordered regions span residues 690 to 717 (WDQQ…VLTG), 733 to 764 (PTQQ…QQQQ), and 796 to 825 (QQQQ…KDHQ). 2 stretches are compositionally biased toward polar residues: residues 701–717 (SPNV…VLTG) and 733–757 (PTQQ…HNNN). Residues 851–1104 (IAIGARIGRG…EILPIMEGMI (254 aa)) form the Protein kinase domain. Residues 857–865 (IGRGGYGQV) and lysine 878 each bind ATP. Aspartate 974 acts as the Proton acceptor in catalysis. Disordered stretches follow at residues 1118–1141 (GRPI…QNMA) and 1245–1288 (QQQL…NDKK). The segment covering 1257–1268 (NRLNYNFNNSNN) has biased composition (low complexity). Residues 1269–1282 (SDIQPMQQENNYRM) are compositionally biased toward polar residues.

Belongs to the protein kinase superfamily. TKL Ser/Thr protein kinase family.

The catalysed reaction is L-seryl-[protein] + ATP = O-phospho-L-seryl-[protein] + ADP + H(+). It catalyses the reaction L-threonyl-[protein] + ATP = O-phospho-L-threonyl-[protein] + ADP + H(+). The polypeptide is Probable serine/threonine-protein kinase drkD (drkD) (Dictyostelium discoideum (Social amoeba)).